Consider the following 132-residue polypeptide: MKKHGILNSDLAKIVDDLGHTDRVCIGDLGLPIPSGVRKIDLSLKAGFPSFQDLLDVYLEHVLVEKIILAEEIKEQNPEQLSQILRKLDDGVTVEYVSHEQLKALNQDVKAVIRTGENTPYSNIILQSGVTI.

H20 (proton donor) is an active-site residue. Residues D28, H99, and 121-123 (YSN) each bind substrate.

Belongs to the RbsD / FucU family. RbsD subfamily. As to quaternary structure, homodecamer.

The protein resides in the cytoplasm. The enzyme catalyses beta-D-ribopyranose = beta-D-ribofuranose. The protein operates within carbohydrate metabolism; D-ribose degradation; D-ribose 5-phosphate from beta-D-ribopyranose: step 1/2. In terms of biological role, catalyzes the interconversion of beta-pyran and beta-furan forms of D-ribose. The polypeptide is D-ribose pyranase (Streptococcus uberis (strain ATCC BAA-854 / 0140J)).